The primary structure comprises 76 residues: Tautomerase PptA (76 aa).

Residue P2 is the Proton acceptor; via imino nitrogen of the active site.

This sequence belongs to the 4-oxalocrotonate tautomerase family. PptA subfamily. Homodimer.

It localises to the cytoplasm. The chain is Tautomerase PptA from Cronobacter sakazakii (strain ATCC BAA-894) (Enterobacter sakazakii).